The chain runs to 331 residues: MMDRYSFIMHQHRDDTVWCPSKIEEQNITRISEFHLMGLSDDLQLQPILFGLFLSMYLVTLLGNLLIILTVSSDSHLHSPMYFFLSNLSLADVSFTSTTLPKMIVDIQTHNRAISYSGCLTQMSFFMLFGCLDSLLLTAMAYDRFVAICHPLHYQFIMNPRLCGLLVFLSVLISLFVSQLHNSVVLQLTYFKSVDISHFFCDPSQLLNLACSDTFTNNIVMYFVGAISGFLPISGIFFSYYKIVSSILRMPSPGGKYKAFSTCGSHLSVVCLFYGTGLGVYLSSAVSLSPRKGAVASIVYTVVTPMLNPFIYSLRNQDIKRAMWRLLRKTV.

Residues 1–47 are Extracellular-facing; sequence MMDRYSFIMHQHRDDTVWCPSKIEEQNITRISEFHLMGLSDDLQLQP. N-linked (GlcNAc...) asparagine glycosylation occurs at asparagine 27. Residues 48–68 traverse the membrane as a helical segment; sequence ILFGLFLSMYLVTLLGNLLII. The Cytoplasmic portion of the chain corresponds to 69 to 80; sequence LTVSSDSHLHSP. Residues 81–100 traverse the membrane as a helical segment; that stretch reads MYFFLSNLSLADVSFTSTTL. Topologically, residues 101–119 are extracellular; sequence PKMIVDIQTHNRAISYSGC. A disulfide bond links cysteine 119 and cysteine 201. A helical membrane pass occupies residues 120 to 140; the sequence is LTQMSFFMLFGCLDSLLLTAM. The Cytoplasmic portion of the chain corresponds to 141 to 164; that stretch reads AYDRFVAICHPLHYQFIMNPRLCG. The chain crosses the membrane as a helical span at residues 165–185; that stretch reads LLVFLSVLISLFVSQLHNSVV. Residues 186–218 lie on the Extracellular side of the membrane; that stretch reads LQLTYFKSVDISHFFCDPSQLLNLACSDTFTNN. A helical membrane pass occupies residues 219-239; it reads IVMYFVGAISGFLPISGIFFS. The Cytoplasmic portion of the chain corresponds to 240–266; it reads YYKIVSSILRMPSPGGKYKAFSTCGSH. A helical transmembrane segment spans residues 267–287; the sequence is LSVVCLFYGTGLGVYLSSAVS. Residues 288–293 are Extracellular-facing; the sequence is LSPRKG. Residues 294-314 form a helical membrane-spanning segment; the sequence is AVASIVYTVVTPMLNPFIYSL. Residues 315-331 lie on the Cytoplasmic side of the membrane; the sequence is RNQDIKRAMWRLLRKTV.

The protein belongs to the G-protein coupled receptor 1 family.

The protein resides in the cell membrane. Functionally, odorant receptor. This chain is Olfactory receptor 7E178, found in Mus musculus (Mouse).